The chain runs to 338 residues: Erlin-2 (338 aa).

Topologically, residues 1–3 (MAQ) are cytoplasmic. A helical membrane pass occupies residues 4 to 24 (LGAVVAVAASFFCASLFSAVH). Over 25–338 (KIEEGHIGVY…DEPMEADSEN (314 aa)) the chain is Lumenal. N106 is a glycosylation site (N-linked (GlcNAc...) asparagine). Positions 177 to 309 (EAIRRNYELM…DIPNMFMDSA (133 aa)) are interaction with ERLIN1. K267 is modified (N6-acetyllysine).

This sequence belongs to the band 7/mec-2 family. In terms of assembly, forms a heteromeric complex with ERLIN1. In complex with ERLIN1, interacts with RNF170. Interacts with activated ITPR1, independently of the degree of ITPR1 polyubiquitination. Interacts with SCAP, INSIG1, SREBF1 and SREBF2 under cholesterol sufficiency conditions; indicative for an association with the SCAP-SREBP-INSIG complex. Probably part of an AMFR/gp78 and INSIG1-containing ubiquitin ligase complex involved in ERAD of HMGCR. Interacts with TMUB1; TMUB1 bridges the association with AMFR. Interacts with SYVN1 and RNF139. Interacts with TMEM259. Interacts with TMEM41B. Deubiquitinated by USP25; leading to stabilization.

It localises to the endoplasmic reticulum membrane. Component of the ERLIN1/ERLIN2 complex which mediates the endoplasmic reticulum-associated degradation (ERAD) of inositol 1,4,5-trisphosphate receptors (IP3Rs) such as ITPR1. Promotes sterol-accelerated ERAD of HMGCR probably implicating an AMFR/gp78-containing ubiquitin ligase complex. Involved in regulation of cellular cholesterol homeostasis by regulation the SREBP signaling pathway. May promote ER retention of the SCAP-SREBF complex. This is Erlin-2 (ERLIN2) from Bos taurus (Bovine).